The following is a 572-amino-acid chain: Phosphoenolpyruvate-protein phosphotransferase (572 aa).

Histidine 190 serves as the catalytic Tele-phosphohistidine intermediate. Phosphoenolpyruvate-binding residues include arginine 297 and arginine 333. Glutamate 432 and aspartate 456 together coordinate Mg(2+). Phosphoenolpyruvate-binding positions include 455-456 and arginine 466; that span reads ND. The Proton donor role is filled by cysteine 503.

It belongs to the PEP-utilizing enzyme family. In terms of assembly, homodimer. Mg(2+) is required as a cofactor.

It is found in the cytoplasm. The enzyme catalyses L-histidyl-[protein] + phosphoenolpyruvate = N(pros)-phospho-L-histidyl-[protein] + pyruvate. Its function is as follows. General (non sugar-specific) component of the phosphoenolpyruvate-dependent sugar phosphotransferase system (sugar PTS). This major carbohydrate active-transport system catalyzes the phosphorylation of incoming sugar substrates concomitantly with their translocation across the cell membrane. Enzyme I transfers the phosphoryl group from phosphoenolpyruvate (PEP) to the phosphoryl carrier protein (HPr). This is Phosphoenolpyruvate-protein phosphotransferase (ptsI) from Listeria monocytogenes serovar 1/2a (strain ATCC BAA-679 / EGD-e).